A 389-amino-acid chain; its full sequence is Nicotinamide-nucleotide adenylyltransferase (389 aa).

The Nuclear localization signal signature appears at 380-383 (KKQK).

This sequence belongs to the eukaryotic NMN adenylyltransferase family. As to expression, abundantly expressed in neuronal and muscle cells. Present at relatively low levels at the neuromuscular junction. Expressed in the eye; present in photoreceptor cells and various neurons in the lamina cortex and medulla cortex and at low levels in the lamina.

It is found in the nucleus. The protein localises to the cytoplasm. It localises to the presynaptic active zone. It catalyses the reaction beta-nicotinamide D-ribonucleotide + ATP + H(+) = diphosphate + NAD(+). It carries out the reaction nicotinate beta-D-ribonucleotide + ATP + H(+) = deamido-NAD(+) + diphosphate. It participates in cofactor biosynthesis; NAD(+) biosynthesis; NAD(+) from nicotinamide D-ribonucleotide: step 1/1. It functions in the pathway cofactor biosynthesis; NAD(+) biosynthesis; deamido-NAD(+) from nicotinate D-ribonucleotide: step 1/1. Catalyzes the formation of NAD(+) from nicotinamide mononucleotide (NMN) and ATP. Essential for viability. Stress-response chaperone protein that prevents toxic aggregation of proteins and promotes proteasome-mediated degradation of misfolded proteins; this is independent of its NAD(+) synthesis activity. Neuroprotective in response to toxic protein aggregation, for example by overexpressed Atx-1/ataxin-1. Required for maintenance and integrity of mature neurons, protecting them from neuronal activity-induced neurodegeneration. Required for the maintenance of axonal and dendritic integrity in both central and peripheral neurons. Chaperone function and neuroprotective roles are largely independent of NAD(+) synthesis activity. In terms of biological role, catalyzes the formation of NAD(+) from nicotinamide mononucleotide (NMN) and ATP. Has, or stimulates, chaperone holdase activity but not refoldase activity. Does not have neuroprotective properties and may stimulate apoptosis and neurodegeneration in response to toxic protein aggregates. Functionally, catalyzes the formation of NAD(+) from nicotinamide mononucleotide (NMN) and ATP. Has, or stimulates, chaperone holdase and refoldase activity. Neuroprotective and reduces the toxic load of protein aggregates, preventing apoptosis and neurodegeneration. Promotes clearance of nuclear misfolded protein aggregates. This chain is Nicotinamide-nucleotide adenylyltransferase, found in Drosophila melanogaster (Fruit fly).